The following is a 331-amino-acid chain: Vitamin B12 import system permease protein BtuC (331 aa).

9 helical membrane passes run 20–42, 62–84, 91–113, 117–136, 148–170, 190–209, 240–262, 277–296, and 303–325; these read VMLAVLLVLSALYLMVGEVFLSP, LVAAMVIGAALAVSGATLQVLLG, GVLGISGGASLAMVIALFLLPVM, TVFMLAAIIGALVFTLILVG, MLLVGVALGILSGAFVTWAFYFS, SWHHHLVTLVLLPVLVWLCL, LAISILIGCAVALGGIISFVGLV, FLLPLSAFAGATLLVFSDIW, and SAELPLGVMTTTIGAPIFIWMLI.

This sequence belongs to the binding-protein-dependent transport system permease family. FecCD subfamily. As to quaternary structure, the complex is composed of two ATP-binding proteins (BtuD), two transmembrane proteins (BtuC) and a solute-binding protein (BtuF).

The protein localises to the cell inner membrane. Functionally, part of the ABC transporter complex BtuCDF involved in vitamin B12 import. Involved in the translocation of the substrate across the membrane. This is Vitamin B12 import system permease protein BtuC from Vibrio vulnificus (strain CMCP6).